A 760-amino-acid polypeptide reads, in one-letter code: Catecholate siderophore receptor Fiu (760 aa).

A signal peptide spans Met-1–Ala-31. Positions Pro-67–Lys-175 constitute a TBDR plug domain. Positions Asp-180–Phe-760 constitute a TBDR beta-barrel domain. A TonB C-terminal box motif is present at residues Arg-743–Phe-760.

The protein belongs to the TonB-dependent receptor family.

It is found in the cell outer membrane. Its function is as follows. Involved in the active transport across the outer membrane of iron complexed with catecholate siderophores such as dihydroxybenzoylserine and dihydroxybenzoate. It derives its energy for transport by interacting with the trans-periplasmic membrane protein TonB. Can also transport catechol-substituted cephalosporins. Receptor for microcins M, H47 and E492. The sequence is that of Catecholate siderophore receptor Fiu (fiu) from Escherichia coli (strain UTI89 / UPEC).